The primary structure comprises 318 residues: N-acyl-aromatic-L-amino acid amidohydrolase (carboxylate-forming) (318 aa).

The interval 1 to 210 is hydrolytic domain; the sequence is MSSLPGSREP…ILDFIELFNQ (210 aa). Residues H21 and E24 each coordinate Zn(2+). Residues R63 and 70 to 71 each bind substrate; that span reads NR. H116 is a binding site for Zn(2+). E177 and Y287 together coordinate substrate. The tract at residues 211-318 is shielding domain; that stretch reads GMDLPAFEMD…RLTPRSTQTP (108 aa). T317 is subject to Phosphothreonine.

Belongs to the AspA/AstE family. Aspartoacylase subfamily. As to quaternary structure, exists as a mixture of homodimers and homotetramer, both catalytically active. It depends on Zn(2+) as a cofactor. As to expression, expressed predominantly in kidney and to a lesser extent in liver. Weakly expressed in heart, small intestine, brain, lung, testis, and stomach.

Its subcellular location is the apical cell membrane. It localises to the cytoplasm. The catalysed reaction is an N-acyl-aromatic L-alpha-amino acid + H2O = an aromatic L-alpha-amino acid + a carboxylate. It carries out the reaction an N-acetyl-L-cysteine-S-conjugate + H2O = an S-substituted L-cysteine + acetate. Plays an important role in deacetylating mercapturic acids in kidney proximal tubules. Also acts on N-acetyl-aromatic amino acids. This chain is N-acyl-aromatic-L-amino acid amidohydrolase (carboxylate-forming) (Acy3), found in Mus musculus (Mouse).